The following is a 287-amino-acid chain: Phosphatidylserine decarboxylase proenzyme (287 aa).

Residues D86, H143, and S250 each act as charge relay system; for autoendoproteolytic cleavage activity in the active site. S250 acts as the Schiff-base intermediate with substrate; via pyruvic acid; for decarboxylase activity in catalysis. The residue at position 250 (S250) is a Pyruvic acid (Ser); by autocatalysis.

The protein belongs to the phosphatidylserine decarboxylase family. PSD-B subfamily. Prokaryotic type I sub-subfamily. Heterodimer of a large membrane-associated beta subunit and a small pyruvoyl-containing alpha subunit. It depends on pyruvate as a cofactor. Post-translationally, is synthesized initially as an inactive proenzyme. Formation of the active enzyme involves a self-maturation process in which the active site pyruvoyl group is generated from an internal serine residue via an autocatalytic post-translational modification. Two non-identical subunits are generated from the proenzyme in this reaction, and the pyruvate is formed at the N-terminus of the alpha chain, which is derived from the carboxyl end of the proenzyme. The autoendoproteolytic cleavage occurs by a canonical serine protease mechanism, in which the side chain hydroxyl group of the serine supplies its oxygen atom to form the C-terminus of the beta chain, while the remainder of the serine residue undergoes an oxidative deamination to produce ammonia and the pyruvoyl prosthetic group on the alpha chain. During this reaction, the Ser that is part of the protease active site of the proenzyme becomes the pyruvoyl prosthetic group, which constitutes an essential element of the active site of the mature decarboxylase.

It localises to the cell membrane. It catalyses the reaction a 1,2-diacyl-sn-glycero-3-phospho-L-serine + H(+) = a 1,2-diacyl-sn-glycero-3-phosphoethanolamine + CO2. Its pathway is phospholipid metabolism; phosphatidylethanolamine biosynthesis; phosphatidylethanolamine from CDP-diacylglycerol: step 2/2. Its function is as follows. Catalyzes the formation of phosphatidylethanolamine (PtdEtn) from phosphatidylserine (PtdSer). The chain is Phosphatidylserine decarboxylase proenzyme from Wigglesworthia glossinidia brevipalpis.